The primary structure comprises 87 residues: Defensin-A (87 aa).

The first 19 residues, 1 to 19 (MKFYLVLAFLTLCAVAVTA), serve as a signal peptide directing secretion. A propeptide spanning residues 20–44 (LPAGDETRIDLETLEEDLRLVDGAQ) is cleaved from the precursor. 3 disulfide bridges follow: Cys-57/Cys-78, Cys-64/Cys-83, and Cys-68/Cys-85.

Hemolymph and fat body.

It localises to the secreted. Its function is as follows. Antibacterial peptide mostly active against Gram-positive and Gram negative bacteria. This is Defensin-A from Glossina morsitans morsitans (Savannah tsetse fly).